The chain runs to 394 residues: Elongation factor Tu (394 aa).

Positions 10-204 (KPHVNVGTIG…ALDTYIPEPE (195 aa)) constitute a tr-type G domain. The G1 stretch occupies residues 19–26 (GHVDHGKT). A GTP-binding site is contributed by 19 to 26 (GHVDHGKT). T26 provides a ligand contact to Mg(2+). The interval 60–64 (GITIA) is G2. Residues 81-84 (DCPG) form a G3 region. Residues 81-85 (DCPGH) and 136-139 (NKCD) each bind GTP. Residues 136–139 (NKCD) form a G4 region. Positions 174–176 (SAL) are G5.

It belongs to the TRAFAC class translation factor GTPase superfamily. Classic translation factor GTPase family. EF-Tu/EF-1A subfamily. Monomer.

The protein localises to the cytoplasm. The catalysed reaction is GTP + H2O = GDP + phosphate + H(+). Functionally, GTP hydrolase that promotes the GTP-dependent binding of aminoacyl-tRNA to the A-site of ribosomes during protein biosynthesis. The sequence is that of Elongation factor Tu from Vibrio parahaemolyticus serotype O3:K6 (strain RIMD 2210633).